The sequence spans 530 residues: Light-harvesting complex I LH38 proteins (530 aa).

It is found in the plastid. The protein localises to the chloroplast. The polypeptide is Light-harvesting complex I LH38 proteins (Euglena gracilis).